The chain runs to 522 residues: GMP synthase [glutamine-hydrolyzing] (522 aa).

In terms of domain architecture, Glutamine amidotransferase type-1 spans 5–204 (YILIIDFGSQ…VKNICNYTNV (200 aa)). The active-site Nucleophile is Cys-82. Catalysis depends on residues His-178 and Glu-180. The region spanning 205–397 (IKYSLSIRKI…IGIPKEIIFR (193 aa)) is the GMPS ATP-PPase domain. 232–238 (SGGIDSF) contacts ATP.

In terms of assembly, homodimer.

It catalyses the reaction XMP + L-glutamine + ATP + H2O = GMP + L-glutamate + AMP + diphosphate + 2 H(+). The protein operates within purine metabolism; GMP biosynthesis; GMP from XMP (L-Gln route): step 1/1. Functionally, catalyzes the synthesis of GMP from XMP. This is GMP synthase [glutamine-hydrolyzing] from Wigglesworthia glossinidia brevipalpis.